Consider the following 352-residue polypeptide: Heavy metal-associated isoprenylated plant protein 36 (352 aa).

An HMA domain is found at 29–92 (YTTWVLRVSI…KIMKAGRHAE (64 aa)). Positions 40 and 43 each coordinate a metal cation. Disordered stretches follow at residues 96–150 (TSME…GNFD), 162–211 (QLQP…GPPE), and 229–252 (PHLH…RHHP). Residues 97–107 (SMENNINNDCN) are compositionally biased toward polar residues. Residues 118–128 (ETSGDEDDDEN) are compositionally biased toward acidic residues. A compositionally biased stretch (gly residues) spans 133–148 (NGGGDVGGGGGGGGGN). The segment covering 172–183 (KKKKKKKKKKKS) has biased composition (basic residues). Positions 192–203 (EGGGGGGGGGGP) are enriched in gly residues. Cysteine methyl ester is present on Cys-349. Residue Cys-349 is the site of S-farnesyl cysteine attachment. Positions 350–352 (CVM) are cleaved as a propeptide — removed in mature form.

This sequence belongs to the HIPP family.

Its function is as follows. Heavy-metal-binding protein. The sequence is that of Heavy metal-associated isoprenylated plant protein 36 from Arabidopsis thaliana (Mouse-ear cress).